A 928-amino-acid polypeptide reads, in one-letter code: BCAS3 microtubule associated cell migration factor (928 aa).

Met1 carries the post-translational modification N-acetylmethionine. Lys215 participates in a covalent cross-link: Glycyl lysine isopeptide (Lys-Gly) (interchain with G-Cter in SUMO1); alternate. Lys215 is covalently cross-linked (Glycyl lysine isopeptide (Lys-Gly) (interchain with G-Cter in SUMO2); alternate). 2 required for recruitment to preautophagosomal structure in response to mitophagy regions span residues 254 to 312 and 437 to 560; these read RGGA…SRRS and YGGQ…IKAP. Phosphoserine is present on residues Ser461, Ser480, and Ser488. 2 disordered regions span residues 472–518 and 795–816; these read TSKQ…PRLS and VRSD…RGVS. Low complexity-rich tracts occupy residues 480–494 and 505–514; these read SPVP…GSPL and NNFTNNNPGN. Residues Ser838, Ser886, and Ser898 each carry the phosphoserine modification. The disordered stretch occupies residues 868 to 928; the sequence is ESPSRDVVGS…PLSLFPTGFP (61 aa). Positions 887–901 are enriched in low complexity; that stretch reads IETLSNSSGSTSGSI.

The protein belongs to the BCAS3 family. In terms of assembly, interacts with histone H3, ESR1, KAT2B and PELP1; the interactions occur in a estrogen-dependent manner. Interacts with beta-tubulin and VIM. Interacts (via C-terminal) with PHAF1; the interaction is requrired for the association with the phagophore. As to expression, expressed in blood islands and yolk sac blood islands (at protein level). Highly expressed in mammary tumors. Expressed in eostrogen-induced epithelial cells of mammary glands. Expressed in brain, heart, kidney, lung, liver and spleen. Expressed in embryonic stem cells, embryoid bodies, endothelial cells and fibroblasts.

It is found in the nucleus. The protein resides in the cytoplasm. Its subcellular location is the cytoskeleton. The protein localises to the preautophagosomal structure. Its function is as follows. Functions synergistically with PELP1 as a transcriptional coactivator of estrogen receptor-responsive genes. Stimulates histone acetyltransferase activity. Binds to chromatin. Plays a role in angiogenesis. Participates in the regulation of cell polarity and directional endothelial cell migration by mediating both the activation and recruitment of CDC42 and the reorganization of the actin cytoskeleton at the cell leading edge. Promotes filipodia formation. Plays a regulatory role in autophagic activity. In complex with PHAF1, associates with the preautophagosomal structure during both non-selective and selective autophagy. Probably binds phosphatidylinositol 3-phosphate (PtdIns3P) which would mediate the recruitment preautophagosomal structures. The protein is BCAS3 microtubule associated cell migration factor of Mus musculus (Mouse).